We begin with the raw amino-acid sequence, 88 residues long: Cell division topological specificity factor (88 aa).

This sequence belongs to the MinE family.

Functionally, prevents the cell division inhibition by proteins MinC and MinD at internal division sites while permitting inhibition at polar sites. This ensures cell division at the proper site by restricting the formation of a division septum at the midpoint of the long axis of the cell. This Methylibium petroleiphilum (strain ATCC BAA-1232 / LMG 22953 / PM1) protein is Cell division topological specificity factor.